Consider the following 310-residue polypeptide: p-hydroxybenzoic acid efflux pump subunit AaeA (310 aa).

Residues 12–32 (AITLVLVILAFIAIFRAWVYY) traverse the membrane as a helical segment.

It belongs to the membrane fusion protein (MFP) (TC 8.A.1) family.

It is found in the cell inner membrane. Its function is as follows. Forms an efflux pump with AaeB. This is p-hydroxybenzoic acid efflux pump subunit AaeA from Salmonella arizonae (strain ATCC BAA-731 / CDC346-86 / RSK2980).